The chain runs to 347 residues: Phosphoribosylformylglycinamidine cyclo-ligase (347 aa).

Belongs to the AIR synthase family.

It is found in the cytoplasm. It catalyses the reaction 2-formamido-N(1)-(5-O-phospho-beta-D-ribosyl)acetamidine + ATP = 5-amino-1-(5-phospho-beta-D-ribosyl)imidazole + ADP + phosphate + H(+). It participates in purine metabolism; IMP biosynthesis via de novo pathway; 5-amino-1-(5-phospho-D-ribosyl)imidazole from N(2)-formyl-N(1)-(5-phospho-D-ribosyl)glycinamide: step 2/2. The sequence is that of Phosphoribosylformylglycinamidine cyclo-ligase from Dechloromonas aromatica (strain RCB).